The chain runs to 557 residues: Glutamine--tRNA ligase (557 aa).

The 'HIGH' region motif lies at 42-52 (PEPNGYLHIGH). ATP is bound by residues 43-45 (EPN) and 49-55 (HIGHAKS). The L-glutamine site is built by aspartate 75 and tyrosine 220. ATP is bound by residues threonine 239 and 270–271 (RL). Positions 277–281 (LTSKR) match the 'KMSKS' region motif.

This sequence belongs to the class-I aminoacyl-tRNA synthetase family. In terms of assembly, monomer.

The protein localises to the cytoplasm. It carries out the reaction tRNA(Gln) + L-glutamine + ATP = L-glutaminyl-tRNA(Gln) + AMP + diphosphate. The sequence is that of Glutamine--tRNA ligase from Haemophilus influenzae (strain ATCC 51907 / DSM 11121 / KW20 / Rd).